Consider the following 126-residue polypeptide: Adenosine 5'-monophosphoramidase HINT1 (126 aa).

A2 carries the post-translational modification N-acetylalanine. The region spanning 18–126 (IFGKIIRKEI…GGRQMHWPPG (109 aa)) is the HIT domain. Residues K21 and K30 each carry the N6-acetyllysine modification. Residue 43–44 (DI) participates in AMP binding. Phosphoserine occurs at positions 45 and 72. AMP contacts are provided by residues N99, 105–107 (GQS), and 112–114 (HLH). Positions 110 to 114 (HVHLH) match the Histidine triad motif motif. The Tele-AMP-histidine intermediate role is filled by H112.

Belongs to the HINT family. In terms of assembly, homodimer. Interacts with CDK7. Interacts with RUVBL1 and RUVBL2 and is associated with the LEF1/TCF1-CTNNB1 complex and with a KAT5 histone acetyltransferase complex. Identified in a complex with MITF and CTNNB1. Interacts with CDC34 and RBX1, and is part of a SCF (SKP2-CUL1-F-box protein) E3 ubiquitin-protein ligase complex. Interacts with SUMO1, SUMO2 and RGS17. Interacts with the Ten-1 ICD form of TENM1. Interacts with CALM1; interaction increases in the presence of calcium ions. As to expression, widely expressed.

It localises to the cytoplasm. Its subcellular location is the nucleus. It catalyses the reaction adenosine 5'-phosphoramidate + H2O = AMP + NH4(+). In terms of biological role, exhibits adenosine 5'-monophosphoramidase activity, hydrolyzing purine nucleotide phosphoramidates with a single phosphate group such as adenosine 5'monophosphoramidate (AMP-NH2) to yield AMP and NH2. Hydrolyzes adenosine 5'monophosphomorpholidate (AMP-morpholidate) and guanosine 5'monophosphomorpholidate (GMP-morpholidate). Hydrolyzes lysyl-AMP (AMP-N-epsilon-(N-alpha-acetyl lysine methyl ester)) generated by lysine tRNA ligase, as well as Met-AMP, His-AMP and Asp-AMP, lysyl-GMP (GMP-N-epsilon-(N-alpha-acetyl lysine methyl ester)) and AMP-N-alanine methyl ester. Hydrolyzes 3-indolepropionic acyl-adenylate, tryptamine adenosine phosphoramidate monoester and other fluorogenic purine nucleoside tryptamine phosphoramidates in vitro. Can also convert adenosine 5'-O-phosphorothioate and guanosine 5'-O-phosphorothioate to the corresponding nucleoside 5'-O-phosphates with concomitant release of hydrogen sulfide. In addition, functions as scaffolding protein that modulates transcriptional activation by the LEF1/TCF1-CTNNB1 complex and by the complex formed with MITF and CTNNB1. Modulates p53/TP53 levels and p53/TP53-mediated apoptosis. Modulates proteasomal degradation of target proteins by the SCF (SKP2-CUL1-F-box protein) E3 ubiquitin-protein ligase complex. Also exhibits SUMO-specific isopeptidase activity, deconjugating SUMO1 from RGS17. Deconjugates SUMO1 from RANGAP1. In Homo sapiens (Human), this protein is Adenosine 5'-monophosphoramidase HINT1 (HINT1).